A 54-amino-acid chain; its full sequence is Putative collagen-like domain-containing protein 065L (54 aa).

Residues 1 to 54 are disordered; that stretch reads MRGLEAPGAVGPTGPSGAPGSQGPDGDVGGMGPEGPKGDDGPVGPKGPQGAAIF. Residues 7 to 51 enclose the Collagen-like domain; the sequence is PGAVGPTGPSGAPGSQGPDGDVGGMGPEGPKGDDGPVGPKGPQGA. Residues 26–35 are compositionally biased toward gly residues; it reads GDVGGMGPEG. The segment covering 42–54 has biased composition (low complexity); that stretch reads PVGPKGPQGAAIF.

This chain is Putative collagen-like domain-containing protein 065L, found in Dryophytes versicolor (chameleon treefrog).